A 154-amino-acid chain; its full sequence is Superoxide dismutase [Cu-Zn] (154 aa).

The Cu cation site is built by His47, His49, and His64. The cysteines at positions 58 and 147 are disulfide-linked. Zn(2+)-binding residues include His64, His72, His81, and Asp84. His121 contributes to the Cu cation binding site. A compositionally biased stretch (basic and acidic residues) spans 125-136; sequence DDLGKGGNEESL. A disordered region spans residues 125–144; that stretch reads DDLGKGGNEESLKTGNAGPR. Arg144 is a substrate binding site.

This sequence belongs to the Cu-Zn superoxide dismutase family. Homodimer. Cu cation is required as a cofactor. Zn(2+) serves as cofactor.

The protein resides in the cytoplasm. The enzyme catalyses 2 superoxide + 2 H(+) = H2O2 + O2. Destroys radicals which are normally produced within the cells and which are toxic to biological systems. This Neurospora crassa (strain ATCC 24698 / 74-OR23-1A / CBS 708.71 / DSM 1257 / FGSC 987) protein is Superoxide dismutase [Cu-Zn] (sod-1).